Here is a 371-residue protein sequence, read N- to C-terminus: Protein-glutamate methylesterase/protein-glutamine glutaminase 3 (371 aa).

Residues 5 to 120 (RVVVIDDSAY…SEEILTIRED (116 aa)) form the Response regulatory domain. D56 is subject to 4-aspartylphosphate. The 189-residue stretch at 174–362 (PAGRLEVVAI…LDRMSREIIQ (189 aa)) folds into the CheB-type methylesterase domain. Active-site residues include S186, H213, and D309.

It belongs to the CheB family. In terms of processing, phosphorylated by CheA. Phosphorylation of the N-terminal regulatory domain activates the methylesterase activity.

The protein resides in the cytoplasm. It catalyses the reaction [protein]-L-glutamate 5-O-methyl ester + H2O = L-glutamyl-[protein] + methanol + H(+). The enzyme catalyses L-glutaminyl-[protein] + H2O = L-glutamyl-[protein] + NH4(+). Involved in chemotaxis. Part of a chemotaxis signal transduction system that modulates chemotaxis in response to various stimuli. Catalyzes the demethylation of specific methylglutamate residues introduced into the chemoreceptors (methyl-accepting chemotaxis proteins or MCP) by CheR. Also mediates the irreversible deamidation of specific glutamine residues to glutamic acid. The protein is Protein-glutamate methylesterase/protein-glutamine glutaminase 3 of Geobacter sulfurreducens (strain ATCC 51573 / DSM 12127 / PCA).